A 58-amino-acid polypeptide reads, in one-letter code: Large ribosomal subunit protein bL32 (58 aa).

The span at 1 to 15 (MAVPKKKTSKAKRNQ) shows a compositional bias: basic residues. Residues 1–23 (MAVPKKKTSKAKRNQRSATWKGK) are disordered.

The protein belongs to the bacterial ribosomal protein bL32 family.

The chain is Large ribosomal subunit protein bL32 from Parasynechococcus marenigrum (strain WH8102).